We begin with the raw amino-acid sequence, 155 residues long: Cell division protein SepF (155 aa).

The span at 22–46 (RYVEEPEQRDERPALEKGRAPKEKQ) shows a compositional bias: basic and acidic residues. The segment at 22–54 (RYVEEPEQRDERPALEKGRAPKEKQTAGMEQNQ) is disordered.

The protein belongs to the SepF family. Homodimer. Interacts with FtsZ.

Its subcellular location is the cytoplasm. Cell division protein that is part of the divisome complex and is recruited early to the Z-ring. Probably stimulates Z-ring formation, perhaps through the cross-linking of FtsZ protofilaments. Its function overlaps with FtsA. In Shouchella clausii (strain KSM-K16) (Alkalihalobacillus clausii), this protein is Cell division protein SepF.